Reading from the N-terminus, the 404-residue chain is Tryptophan synthase beta chain (404 aa).

Lysine 94 carries the N6-(pyridoxal phosphate)lysine modification.

This sequence belongs to the TrpB family. As to quaternary structure, tetramer of two alpha and two beta chains. Pyridoxal 5'-phosphate serves as cofactor.

The enzyme catalyses (1S,2R)-1-C-(indol-3-yl)glycerol 3-phosphate + L-serine = D-glyceraldehyde 3-phosphate + L-tryptophan + H2O. Its pathway is amino-acid biosynthesis; L-tryptophan biosynthesis; L-tryptophan from chorismate: step 5/5. Its function is as follows. The beta subunit is responsible for the synthesis of L-tryptophan from indole and L-serine. This Staphylococcus saprophyticus subsp. saprophyticus (strain ATCC 15305 / DSM 20229 / NCIMB 8711 / NCTC 7292 / S-41) protein is Tryptophan synthase beta chain.